Here is a 473-residue protein sequence, read N- to C-terminus: Uronate isomerase (473 aa).

This sequence belongs to the metallo-dependent hydrolases superfamily. Uronate isomerase family.

The catalysed reaction is D-glucuronate = D-fructuronate. It catalyses the reaction aldehydo-D-galacturonate = keto-D-tagaturonate. The protein operates within carbohydrate metabolism; pentose and glucuronate interconversion. The sequence is that of Uronate isomerase (uxaC) from Geobacillus stearothermophilus (Bacillus stearothermophilus).